The sequence spans 595 residues: Elongation factor 4 (595 aa).

Residues K2–K184 form the tr-type G domain. GTP contacts are provided by residues D14–T19 and N131–D134.

It belongs to the TRAFAC class translation factor GTPase superfamily. Classic translation factor GTPase family. LepA subfamily.

It localises to the cell inner membrane. It carries out the reaction GTP + H2O = GDP + phosphate + H(+). Required for accurate and efficient protein synthesis under certain stress conditions. May act as a fidelity factor of the translation reaction, by catalyzing a one-codon backward translocation of tRNAs on improperly translocated ribosomes. Back-translocation proceeds from a post-translocation (POST) complex to a pre-translocation (PRE) complex, thus giving elongation factor G a second chance to translocate the tRNAs correctly. Binds to ribosomes in a GTP-dependent manner. The polypeptide is Elongation factor 4 (Vesicomyosocius okutanii subsp. Calyptogena okutanii (strain HA)).